Consider the following 1003-residue polypeptide: Translation initiation factor IF-2 (1003 aa).

Composition is skewed to basic and acidic residues over residues 61–74 (EKFS…DRNK), 139–169 (PVVE…KKPE), 180–206 (LEEK…KETP), 219–229 (VFKIRPTEFKS), and 252–290 (SKEE…DKIS). Disordered regions lie at residues 61 to 81 (EKFS…SIEG) and 135 to 362 (PKAE…KDRF). A compositionally biased stretch (low complexity) spans 315 to 350 (NAAGTTNAGGASNNNQRNDNANRPNRNNNSKPNGNN). Positions 502–672 (PRAPIVTVMG…LLEAEMLDLK (171 aa)) constitute a tr-type G domain. Positions 511–518 (GHVDHGKT) are G1. 511–518 (GHVDHGKT) lines the GTP pocket. A G2 region spans residues 536-540 (GITQH). The tract at residues 558 to 561 (DTPG) is G3. GTP contacts are provided by residues 558 to 562 (DTPGH) and 612 to 615 (NKVD). The G4 stretch occupies residues 612–615 (NKVD). The tract at residues 648 to 650 (SAK) is G5.

The protein belongs to the TRAFAC class translation factor GTPase superfamily. Classic translation factor GTPase family. IF-2 subfamily.

It localises to the cytoplasm. In terms of biological role, one of the essential components for the initiation of protein synthesis. Protects formylmethionyl-tRNA from spontaneous hydrolysis and promotes its binding to the 30S ribosomal subunits. Also involved in the hydrolysis of GTP during the formation of the 70S ribosomal complex. In Phocaeicola vulgatus (strain ATCC 8482 / DSM 1447 / JCM 5826 / CCUG 4940 / NBRC 14291 / NCTC 11154) (Bacteroides vulgatus), this protein is Translation initiation factor IF-2.